The chain runs to 166 residues: MTDRTAFYAGSFDPLTNGHLDVLKGALELADTVVIGIGIHPGKKPLFSYGERVALIERSAKDELGADGGRIKVVAFDNLVIDAARVHGASIMIRGLRDGTDLDYEMQMAGMNQTMAPELLTVFLPASPSVRTVTATLVRQIASMGGNVAPFVPAVVAAALKEKFSA.

Position 11 (Ser-11) interacts with substrate. Residues 11–12 and His-19 each bind ATP; that span reads SF. 3 residues coordinate substrate: Lys-43, Val-80, and Arg-94. ATP contacts are provided by residues 95 to 97, Glu-105, and 130 to 136; these read GLR and VRTVTAT.

Belongs to the bacterial CoaD family. Homohexamer. The cofactor is Mg(2+).

The protein resides in the cytoplasm. It catalyses the reaction (R)-4'-phosphopantetheine + ATP + H(+) = 3'-dephospho-CoA + diphosphate. Its pathway is cofactor biosynthesis; coenzyme A biosynthesis; CoA from (R)-pantothenate: step 4/5. Its function is as follows. Reversibly transfers an adenylyl group from ATP to 4'-phosphopantetheine, yielding dephospho-CoA (dPCoA) and pyrophosphate. This Chelativorans sp. (strain BNC1) protein is Phosphopantetheine adenylyltransferase.